A 307-amino-acid polypeptide reads, in one-letter code: Small ribosomal subunit protein uS3 (307 aa).

The region spanning 17–86 (MDEYFAEQLN…NPQIDAQEVK (70 aa)) is the KH type-2 domain. The span at 201–226 (IEEPAEKPAEKQVEKPAVAPKKEAAK) shows a compositional bias: basic and acidic residues. A disordered region spans residues 201–265 (IEEPAEKPAE…QVEASEDFEE (65 aa)). Over residues 240 to 265 (PTEEPEVAEPEEAEEAQVEASEDFEE) the composition is skewed to acidic residues.

Belongs to the universal ribosomal protein uS3 family. As to quaternary structure, part of the 30S ribosomal subunit.

Functionally, binds the lower part of the 30S subunit head. This is Small ribosomal subunit protein uS3 from Methanosarcina mazei (strain ATCC BAA-159 / DSM 3647 / Goe1 / Go1 / JCM 11833 / OCM 88) (Methanosarcina frisia).